The primary structure comprises 318 residues: Protein teg (318 aa).

The region spanning 7–182 (ITFDGGGTLG…VATNTSTASI (176 aa)) is the PNPLA domain. The GXGXXG signature appears at 11–16 (GGGTLG). Positions 42–46 (GNSIG) match the GXSXG motif. Serine 44 serves as the catalytic Nucleophile. Catalysis depends on aspartate 169, which acts as the Proton acceptor.

Its function is as follows. Probable lipid hydrolase. This is Protein teg (teg) from Priestia megaterium (strain ATCC 14581 / DSM 32 / CCUG 1817 / JCM 2506 / NBRC 15308 / NCIMB 9376 / NCTC 10342 / NRRL B-14308 / VKM B-512 / Ford 19) (Bacillus megaterium).